The primary structure comprises 94 residues: Signal peptidase complex subunit 1 (94 aa).

At serine 2 the chain carries N-acetylserine. Over 2-28 (SEILQDVQRKLVFPIDFPSQRKTEKFQ) the chain is Cytoplasmic. A helical membrane pass occupies residues 29–49 (QLSLMIGALVACILGFAQQSL). Position 50 (lysine 50) is a topological domain, lumenal. A helical membrane pass occupies residues 51 to 71 (VLLTAYGISCVITLICVLPAY). Over 72–94 (PWYNKQKLRWAQPKIEINVDQYD) the chain is Cytoplasmic.

This sequence belongs to the SPCS1 family. Component of the signal peptidase complex (SPC) composed of a catalytic subunit SEC11 and three accessory subunits SPC1, SPC2 and SPC3. The complex induces a local thinning of the ER membrane which is used to measure the length of the signal peptide (SP) h-region of protein substrates. This ensures the selectivity of the complex towards h-regions shorter than 18-20 amino acids. SPC associates with the translocon complex. Interacts with SBH1 and SEB2/SBH2.

Its subcellular location is the endoplasmic reticulum membrane. Its function is as follows. Component of the signal peptidase complex (SPC) which catalyzes the cleavage of N-terminal signal sequences from nascent proteins as they are translocated into the lumen of the endoplasmic reticulum. Dispensable for SPC enzymatic activity. The chain is Signal peptidase complex subunit 1 (SPC1) from Saccharomyces cerevisiae (strain ATCC 204508 / S288c) (Baker's yeast).